A 911-amino-acid polypeptide reads, in one-letter code: Band 3 anion transport protein (911 aa).

Residue Met-1 is modified to N-acetylmethionine. The span at 1-26 (MEELQDDYEDMMEENLEQEEYEDPDI) shows a compositional bias: acidic residues. The interval 1 to 40 (MEELQDDYEDMMEENLEQEEYEDPDIPESQMEEPAAHDTE) is disordered. Residues 1–403 (MEELQDDYED…LSDITDAFSP (403 aa)) are Cytoplasmic-facing. 3 positions are modified to phosphotyrosine: Tyr-8, Tyr-21, and Tyr-46. Residues 13–31 (EENLEQEEYEDPDIPESQM) are (Microbial infection) Interaction with P.falciparum (isolate K1) FBPA. The segment at 55-290 (HKVYVELQEL…LGRAAATLMS (236 aa)) is globular. The segment at 176–185 (AVLTRSGDPS) is interaction with ANK1. Phosphoserine is present on residues Ser-185 and Ser-350. The dimerization arm stretch occupies residues 304–357 (RGELLHSLEGFLDCSLVLPPTDAPSEQALLSLVPVQRELLRRRYQSSPAKPDSS). Position 359 is a phosphotyrosine (Tyr-359). The chain crosses the membrane as a helical span at residues 404 to 427 (QVLAAVIFIYFAALSPAITFGGLL). At 428-435 (GEKTRNQM) the chain is on the extracellular side. A helical transmembrane segment spans residues 436–456 (GVSELLISTAVQGILFALLGA). The Cytoplasmic portion of the chain corresponds to 457–459 (QPL). A discontinuously helical membrane pass occupies residues 460-476 (LVVGFSGPLLVFEEAFF). At 477-485 (SFCETNGLE) the chain is on the extracellular side. A helical membrane pass occupies residues 486–506 (YIVGRVWIGFWLILLVVLVVA). Over 507 to 518 (FEGSFLVRFISR) the chain is Cytoplasmic. A helical membrane pass occupies residues 519 to 541 (YTQEIFSFLISLIFIYETFSKLI). The Extracellular portion of the chain corresponds to 542 to 570 (KIFQDHPLQKTYNYNVLMVPKPQGPLPNT). Positions 559–630 (MVPKPQGPLP…DFFIQDTYTQ (72 aa)) are involved in anion transport. Residues 571-591 (ALLSLVLMAGTFFFAMMLRKF) traverse the membrane as a helical segment. Residues 592 to 602 (KNSSYFPGKLR) lie on the Cytoplasmic side of the membrane. The helical transmembrane segment at 603-623 (RVIGDFGVPISILIMVLVDFF) threads the bilayer. At 624–663 (IQDTYTQKLSVPDGFKVSNSSARGWVIHPLGLRSEFPIWM) the chain is on the extracellular side. Asn-642 is a glycosylation site (N-linked (GlcNAc...) (complex) asparagine). Residues 664 to 684 (MFASALPALLVFILIFLESQI) form a helical membrane-spanning segment. Residues 685-700 (TTLIVSKPERKMVKGS) are Cytoplasmic-facing. A helical transmembrane segment spans residues 701–719 (GFHLDLLLVVGMGGVAALF). Residues 720 to 737 (GMPWLSATTVRSVTHANA) traverse the membrane as a discontinuously helical segment. The interval 720 to 761 (GMPWLSATTVRSVTHANALTVMGKASTPGAAAQIQEVKEQRI) is (Microbial infection) 5ABC region; interaction with P.falciparum (isolate 3D7) MSP9. Residues 738 to 760 (LTVMGKASTPGAAAQIQEVKEQR) lie on the Cytoplasmic side of the membrane. A run of 2 helical transmembrane segments spans residues 761-781 (ISGLLVAVLVGLSILMEPILS) and 782-800 (RIPLAVLFGIFLYMGVTSL). Topologically, residues 801–838 (SGIQLFDRILLLFKPPKYHPDVPYVKRVKTWRMHLFTG) are cytoplasmic. Residues 839–869 (IQIICLAVLWVVKSTPASLALPFVLILTVPL) constitute an intramembrane region (discontinuously helical). Cys-843 carries the S-palmitoyl cysteine lipid modification. The Cytoplasmic segment spans residues 870 to 911 (RRVLLPLIFRNVELQCLDADDAKATFDEEEGRDEYDEVAMPV). At Tyr-904 the chain carries Phosphotyrosine.

The protein belongs to the anion exchanger (TC 2.A.31) family. As to quaternary structure, a dimer in solution, but in its membrane environment, it exists primarily as a mixture of dimers and tetramers and spans the membrane asymmetrically. Component of the ankyrin-1 complex in the erythrocyte, composed of ANK1, RHCE, RHAG, SLC4A1, EPB42, GYPA, GYPB and AQP1. Interacts with STOM; this interaction positively regulates SLC4A1 activity. Interacts with GYPA; a GYPA monomer is bound at each end of the SLC4A1 dimer forming a heterotetramer. Three SLC4A1 dimers (Band 3-I, Band 3-II and Band 3-III) participates in the ankyrin-1 complex. Interacts (via the cytoplasmic domain) with EPB42; this interaction is mediated by the SLC4A1 Band 3-I dimer. Interacts (via the cytoplasmic domain) directly with ANK1; this interaction is mediated by the SLC4A1 Band 3-II and Band 3-III dimers. Interacts with TMEM139. In terms of assembly, (Microbial infection) Interacts (via N-terminus) with P.falciparum (isolate K1) aldolase FBPA; the interaction inhibits FBPA catalytic activity. As to quaternary structure, (Microbial infection) Interacts (via the 5ABC region) with P.falciparum (isolate 3D7) MSP9/ABRA (via N-terminus). (Microbial infection) Interacts (via the 5ABC region) with P.falciparum (isolate 3D7) MSP1 p42 subunit. In terms of processing, phosphorylated on Tyr-8 and Tyr-21 most likely by SYK. PP1-resistant phosphorylation that precedes Tyr-359 and Tyr-904 phosphorylation. Post-translationally, phosphorylated on Tyr-359 and Tyr-904 most likely by LYN. PP1-inhibited phosphorylation that follows Tyr-8 and Tyr-21 phosphorylation. N-glycosylated. As to expression, detected in erythrocytes (at protein level). Expressed in kidney (at protein level).

Its subcellular location is the cell membrane. It localises to the basolateral cell membrane. The catalysed reaction is hydrogencarbonate(in) + chloride(out) = hydrogencarbonate(out) + chloride(in). Phenyl isothiocyanate inhibits anion transport in vitro. Its function is as follows. Functions both as a transporter that mediates electroneutral anion exchange across the cell membrane and as a structural protein. Component of the ankyrin-1 complex of the erythrocyte membrane; required for normal flexibility and stability of the erythrocyte membrane and for normal erythrocyte shape via the interactions of its cytoplasmic domain with cytoskeletal proteins, glycolytic enzymes, and hemoglobin. Functions as a transporter that mediates the 1:1 exchange of inorganic anions across the erythrocyte membrane. Mediates chloride-bicarbonate exchange in the kidney, and is required for normal acidification of the urine. In terms of biological role, (Microbial infection) Acts as a receptor for P.falciparum (isolate 3D7) MSP9 and thus, facilitates merozoite invasion of erythrocytes. Acts as a receptor for P.falciparum (isolate 3D7) MSP1 and thus, facilitates merozoite invasion of erythrocytes. The polypeptide is Band 3 anion transport protein (Homo sapiens (Human)).